The following is a 734-amino-acid chain: Photosystem I P700 chlorophyll a apoprotein A2 (734 aa).

Transmembrane regions (helical) follow at residues 46–69 (IFAS…FHVA), 135–158 (LYTG…LHLQ), 175–199 (LNHH…HVAI), 273–291 (IAHH…GHMY), 330–353 (LHFQ…QHIY), 369–395 (AALY…IFFI), 417–439 (AIIS…LYVH), and 517–535 (FLVH…LILV). Positions 559 and 568 each coordinate [4Fe-4S] cluster. 2 helical membrane-spanning segments follow: residues 575 to 596 (AFYL…YWHW) and 643 to 665 (LSVW…MFLI). Chlorophyll a-binding residues include H654, M662, and Y670. W671 contributes to the phylloquinone binding site. The helical transmembrane segment at 707–727 (LVGLAHFSVGYIFTYAAFLIA) threads the bilayer.

The protein belongs to the PsaA/PsaB family. The PsaA/B heterodimer binds the P700 chlorophyll special pair and subsequent electron acceptors. PSI consists of a core antenna complex that captures photons, and an electron transfer chain that converts photonic excitation into a charge separation. The eukaryotic PSI reaction center is composed of at least 11 subunits. The cofactor is P700 is a chlorophyll a/chlorophyll a' dimer, A0 is one or more chlorophyll a, A1 is one or both phylloquinones and FX is a shared 4Fe-4S iron-sulfur center..

Its subcellular location is the plastid. It is found in the chloroplast thylakoid membrane. It catalyses the reaction reduced [plastocyanin] + hnu + oxidized [2Fe-2S]-[ferredoxin] = oxidized [plastocyanin] + reduced [2Fe-2S]-[ferredoxin]. PsaA and PsaB bind P700, the primary electron donor of photosystem I (PSI), as well as the electron acceptors A0, A1 and FX. PSI is a plastocyanin-ferredoxin oxidoreductase, converting photonic excitation into a charge separation, which transfers an electron from the donor P700 chlorophyll pair to the spectroscopically characterized acceptors A0, A1, FX, FA and FB in turn. Oxidized P700 is reduced on the lumenal side of the thylakoid membrane by plastocyanin. This is Photosystem I P700 chlorophyll a apoprotein A2 from Staurastrum punctulatum (Green alga).